The sequence spans 120 residues: Sirohydrochlorin cobaltochelatase (120 aa).

Residue His-9 is the Proton acceptor of the active site. His-9 contacts Co(2+). Residues Gln-43 and 68 to 73 (FAAGTH) contribute to the substrate site. His-73 is a binding site for Co(2+).

This sequence belongs to the CbiX family. CbiXS subfamily. As to quaternary structure, homotetramer; dimer of dimers.

It catalyses the reaction Co-sirohydrochlorin + 2 H(+) = sirohydrochlorin + Co(2+). The protein operates within cofactor biosynthesis; adenosylcobalamin biosynthesis; cob(II)yrinate a,c-diamide from sirohydrochlorin (anaerobic route): step 1/10. In terms of biological role, catalyzes the insertion of Co(2+) into sirohydrochlorin as part of the anaerobic pathway to cobalamin biosynthesis. This is Sirohydrochlorin cobaltochelatase from Sulfurisphaera tokodaii (strain DSM 16993 / JCM 10545 / NBRC 100140 / 7) (Sulfolobus tokodaii).